The sequence spans 1049 residues: Dyslexia-associated protein KIAA0319-like protein (1049 aa).

The Cytoplasmic portion of the chain corresponds to M1–R29. Residues T30–S50 traverse the membrane as a helical segment. An MANSC domain is found at A49–M127. Residues E51–Y932 lie on the Extracellular side of the membrane. The disordered stretch occupies residues T234–V277. N-linked (GlcNAc...) asparagine glycosylation is found at N247, N395, and N487. PKD domains are found at residues V310–E401, I409–A498, V504–E594, Q600–E688, and I694–D785. A helical membrane pass occupies residues V933–C953. The Cytoplasmic segment spans residues C954–L1049. T974 carries the post-translational modification Phosphothreonine. 3 positions are modified to phosphoserine: S978, S1009, and S1031. Residues G1022–L1049 are disordered. The span at Q1028 to T1037 shows a compositional bias: polar residues. T1037 carries the phosphothreonine modification.

Interacts with RTN4R. In terms of processing, N-glycosylated.

Its subcellular location is the cytoplasmic granule membrane. The protein resides in the golgi apparatus membrane. It localises to the golgi apparatus. The protein localises to the trans-Golgi network membrane. It is found in the cell membrane. In terms of biological role, possible role in axon guidance through interaction with RTN4R. This is Dyslexia-associated protein KIAA0319-like protein from Pongo abelii (Sumatran orangutan).